The following is a 271-amino-acid chain: Protein PXR1 (271 aa).

2 disordered regions span residues 1–26 (MGLA…NNTS) and 149–233 (KKRP…DSAA). The segment covering 17 to 26 (RNTTWSNNTS) has biased composition (polar residues). A G-patch domain is found at 25–71 (TSRFGHKHLEKLGWKPGSGLGLVPDSTTSHIKVSIKDDNLGLGAKLK). Over residues 165–205 (KKTKKVKKEKKVKKVKKEKKEKKEKKDKKEKKVKKEKKEKK) the composition is skewed to basic residues. Residues 206-230 (EKKLKDKHSKDTNEITRDQMLKPRD) are compositionally biased toward basic and acidic residues.

Belongs to the PINX1 family.

The protein localises to the nucleus. Its subcellular location is the nucleolus. Functionally, involved in rRNA-processing at A0, A1 and A2 sites and negatively regulates telomerase. The sequence is that of Protein PXR1 (PXR1) from Kluyveromyces lactis (strain ATCC 8585 / CBS 2359 / DSM 70799 / NBRC 1267 / NRRL Y-1140 / WM37) (Yeast).